Consider the following 356-residue polypeptide: Probable neutral protease 2 homolog TRV_06370 (356 aa).

An N-terminal signal peptide occupies residues 1 to 17 (MQFTALLAALGAPLALA). The propeptide occupies 18–183 (ASIPAAAHNH…DDSTGVIDKR (166 aa)). Cystine bridges form between C191–C262 and C269–C287. H311 contacts Zn(2+). E312 is an active-site residue. Positions 315 and 326 each coordinate Zn(2+).

This sequence belongs to the peptidase M35 family. Zn(2+) serves as cofactor.

Its subcellular location is the secreted. The enzyme catalyses Preferential cleavage of bonds with hydrophobic residues in P1'. Also 3-Asn-|-Gln-4 and 8-Gly-|-Ser-9 bonds in insulin B chain.. Its function is as follows. Probable secreted metalloprotease that shows high activities on basic nuclear substrates such as histone and protamine. May be involved in virulence. This Trichophyton verrucosum (strain HKI 0517) protein is Probable neutral protease 2 homolog TRV_06370.